Here is a 473-residue protein sequence, read N- to C-terminus: PPE family protein PPE37 (473 aa).

Residues 203–206 carry the Iron-binding motif motif; sequence DFLE. 2 helical membrane passes run 227 to 247 and 250 to 270; these read VLDWFISFVSGPVFTFLAYLV and PLIYFGPFAPLTSPVLLPAGL.

It belongs to the mycobacterial PPE family.

The protein localises to the cell membrane. Essential for efficient heme-iron acquisition (HIA). Binds iron. Strains with a functional PPE37 can utilize low concentrations of hemin very efficiently in broth and on agar plates. During infection, might interfere with the pro-inflammatory cytokine response in infected macrophages. Functionally, in vitro, incubation of the protein in the presence of M.tuberculosis proteases leads to the cleavage of PPE37 into two segments, the N- and C-terminal segments. Transfection of human monocytic THP-1 cell lines with the N-terminal segment leads to the proliferation and differentiation of THP-1 cells into adherent stellate cells with dendritic cell-like morphology. Transfection of THP-1 cells with the C-terminal segment leads to the apoptosis of the cells. Recombinant protein antigens display strong B-cell response in tuberculosis patients and immunized mice. The chain is PPE family protein PPE37 from Mycobacterium tuberculosis (strain ATCC 25618 / H37Rv).